A 67-amino-acid polypeptide reads, in one-letter code: UPF0434 protein Patl_1782 (67 aa).

This sequence belongs to the UPF0434 family.

The chain is UPF0434 protein Patl_1782 from Pseudoalteromonas atlantica (strain T6c / ATCC BAA-1087).